A 471-amino-acid chain; its full sequence is Putative multidrug resistance protein MdtD (471 aa).

Over 1-11 (MTDLPDSTRWQ) the chain is Periplasmic. The helical transmembrane segment at 12–32 (LWIVAFGFFMQSLDTTIVNTA) threads the bilayer. Topologically, residues 33–48 (LPSMAQSLGESPLHMH) are cytoplasmic. The chain crosses the membrane as a helical span at residues 49–69 (MVIVSYVLTVAVMLPASGWLA). Residues 70–76 (DKVGVRN) lie on the Periplasmic side of the membrane. The chain crosses the membrane as a helical span at residues 77 to 97 (IFFTAIVLFTLGSLFCALSGT). Over 98-101 (LNEL) the chain is Cytoplasmic. Residues 102-124 (LLARALQGVGGAMMVPVGRLTVM) traverse the membrane as a helical segment. Topologically, residues 125–137 (KIVPREQYMAAMT) are periplasmic. A helical membrane pass occupies residues 138–158 (FVTLPGQVGPLLGPALGGLLV). The Cytoplasmic portion of the chain corresponds to 159 to 164 (EYASWH). A helical transmembrane segment spans residues 165-185 (WIFLINIPVGIIGAIATLMLM). At 186–196 (PNYTMQTRRFD) the chain is on the periplasmic side. A helical membrane pass occupies residues 197 to 217 (LSGFLLLAVGMAVLTLALDGS). The Cytoplasmic portion of the chain corresponds to 218 to 224 (KGTGFSP). A helical transmembrane segment spans residues 225 to 245 (LAIAGLVAVGVVALVLYLLHA). The Periplasmic portion of the chain corresponds to 246 to 262 (QNNNRALFSLKLFRTRN). The chain crosses the membrane as a helical span at residues 263–283 (FSLGLAGSFAGRIGSGMLPFM). Over 284-285 (TP) the chain is Cytoplasmic. A helical membrane pass occupies residues 286–306 (VFLQIGLGFSPFHAGLMMIPM). Topologically, residues 307-341 (VLGSMGMKRIVVQVVNRFGYRRVLVATTLGLSLVT) are periplasmic. Residues 342 to 362 (LLFMTTALLGWYYVLPFVLFL) form a helical membrane-spanning segment. The Cytoplasmic segment spans residues 363–395 (QGMVNSTRFSSMNTLTLKDLPDNLASSGNSLLS). The helical transmembrane segment at 396–416 (MIMQLSMSIGVTIAGLLLGLF) threads the bilayer. Residues 417-430 (GSQHVSVDSGTTQT) lie on the Periplasmic side of the membrane. The helical transmembrane segment at 431–451 (VFMYTWLSMAFIIALPAFVFA) threads the bilayer. The Cytoplasmic portion of the chain corresponds to 452 to 471 (RVPSDTHQNVAISRRKRSAQ).

Belongs to the major facilitator superfamily. TCR/Tet family.

The protein resides in the cell inner membrane. In Escherichia coli O1:K1 / APEC, this protein is Putative multidrug resistance protein MdtD.